The following is a 309-amino-acid chain: Olfactory receptor 10J5 (309 aa).

At 1 to 25 the chain is on the extracellular side; it reads MKRKNFTEVSEFIFLGFSSFGKHQI. N-linked (GlcNAc...) asparagine glycosylation occurs at Asn-5. A helical transmembrane segment spans residues 26 to 46; the sequence is TLFVVFLTVYILTLVANIIIV. The Cytoplasmic segment spans residues 47–54; that stretch reads TIICIDHH. The helical transmembrane segment at 55-75 threads the bilayer; that stretch reads LHTPMYFFLSMLASSETVYTL. The Extracellular portion of the chain corresponds to 76–99; sequence VIVPRMLLSLIFHNQPISLAGCAT. A disulfide bridge connects residues Cys-97 and Cys-188. A helical membrane pass occupies residues 100 to 120; the sequence is QMFFFVILATNNCFLLTAMGY. Residues 121–139 are Cytoplasmic-facing; it reads DRYVAICRPLRYTVIMSKG. The chain crosses the membrane as a helical span at residues 140–160; that stretch reads LCAQLVCGSFGIGLTMAVLHV. The Extracellular portion of the chain corresponds to 161-196; sequence TAMFNLPFCGTVVDHFFCDIYPVMKLSCIDTTINEI. The chain crosses the membrane as a helical span at residues 197-216; the sequence is INYGVSSFVIFVPIGLIFIS. Residues 217–236 are Cytoplasmic-facing; it reads YVLVISSILQIASAEGRKKT. A helical transmembrane segment spans residues 237–257; the sequence is FATCVSHLTVVIVHCGCASIA. Topologically, residues 258 to 270 are extracellular; sequence YLKPKSESSIEKD. The helical transmembrane segment at 271–291 threads the bilayer; the sequence is LVLSVTYTIITPLLNPVVYSL. Residues 292 to 309 are Cytoplasmic-facing; it reads RNKEVKDALCRVVGRNIS.

This sequence belongs to the G-protein coupled receptor 1 family. In terms of tissue distribution, expressed in both the aorta, the coronary artery and umbilical vein endothelial cells (HUVECs) (at protein level).

It is found in the cell membrane. In terms of biological role, olfactory receptor. Activated by the synthetic floral odorant, lyral, and by alpha-cedrene, a sesquiterpene constituent of cedarwood oil. Its activation increases intracellular Ca(2+). Acts as a key regulator of myogenesis through its actions on cell migration and adhesion by activating the Ca(2+)-dependent AKT signal transduction pathway. Also acts as a regulator of angiogenesis. Moreover, plays a role in the regulation of lipid accumulation in hepatocytes via the cAMP-PKA pathway. May be involved in sperm chemotaxis and motility. The chain is Olfactory receptor 10J5 from Homo sapiens (Human).